The primary structure comprises 295 residues: Tyrosine recombinase XerD (295 aa).

The Core-binding (CB) domain maps to 1–85; it reads MNTIIEEYLN…TIRSFHQFAL (85 aa). In terms of domain architecture, Tyr recombinase spans 106 to 289; sequence KLPDVLEIDE…SKSQIRKMYT (184 aa). Residues Arg146, Lys170, His241, Arg244, and His267 contribute to the active site. The O-(3'-phospho-DNA)-tyrosine intermediate role is filled by Tyr276.

This sequence belongs to the 'phage' integrase family. XerD subfamily. In terms of assembly, forms a cyclic heterotetrameric complex composed of two molecules of XerC and two molecules of XerD.

Its subcellular location is the cytoplasm. Functionally, site-specific tyrosine recombinase, which acts by catalyzing the cutting and rejoining of the recombining DNA molecules. The XerC-XerD complex is essential to convert dimers of the bacterial chromosome into monomers to permit their segregation at cell division. It also contributes to the segregational stability of plasmids. The sequence is that of Tyrosine recombinase XerD from Staphylococcus epidermidis (strain ATCC 12228 / FDA PCI 1200).